The sequence spans 371 residues: Putative phosphoserine aminotransferase (371 aa).

Arg-45 provides a ligand contact to L-glutamate. Residues Phe-103, Thr-149, Asp-171, and Gln-194 each contribute to the pyridoxal 5'-phosphate site. Position 195 is an N6-(pyridoxal phosphate)lysine (Lys-195). 246 to 247 (NT) is a pyridoxal 5'-phosphate binding site.

The protein belongs to the class-V pyridoxal-phosphate-dependent aminotransferase family. SerC subfamily. As to quaternary structure, homodimer. The cofactor is pyridoxal 5'-phosphate.

Its subcellular location is the cytoplasm. The enzyme catalyses O-phospho-L-serine + 2-oxoglutarate = 3-phosphooxypyruvate + L-glutamate. It carries out the reaction 4-(phosphooxy)-L-threonine + 2-oxoglutarate = (R)-3-hydroxy-2-oxo-4-phosphooxybutanoate + L-glutamate. It functions in the pathway amino-acid biosynthesis; L-serine biosynthesis; L-serine from 3-phospho-D-glycerate: step 2/3. Its pathway is cofactor biosynthesis; pyridoxine 5'-phosphate biosynthesis; pyridoxine 5'-phosphate from D-erythrose 4-phosphate: step 3/5. Functionally, catalyzes the reversible conversion of 3-phosphohydroxypyruvate to phosphoserine and of 3-hydroxy-2-oxo-4-phosphonooxybutanoate to phosphohydroxythreonine. The protein is Putative phosphoserine aminotransferase of Mycolicibacterium vanbaalenii (strain DSM 7251 / JCM 13017 / BCRC 16820 / KCTC 9966 / NRRL B-24157 / PYR-1) (Mycobacterium vanbaalenii).